The chain runs to 349 residues: Alpha-centractin (349 aa).

An N-acetylmethionine modification is found at methionine 1.

The protein belongs to the actin family. ARP1 subfamily. As to quaternary structure, part of the ACTR1A/ACTB filament around which the dynactin complex is built. The filament contains 8 copies of ACTR1A and 1 ACTB. Interacts with dynein and adapters such as BICD2. Interacts with BCCIP (isoform 2/alpha).

Its subcellular location is the cytoplasm. The protein resides in the cytoskeleton. It is found in the microtubule organizing center. It localises to the centrosome. The protein localises to the cell cortex. In terms of biological role, part of the ACTR1A/ACTB filament around which the dynactin complex is built. The dynactin multiprotein complex activates the molecular motor dynein for ultra-processive transport along microtubules. In Sus scrofa (Pig), this protein is Alpha-centractin (ACTR1A).